The sequence spans 194 residues: Peptidyl-tRNA hydrolase (194 aa).

Tyrosine 16 contacts tRNA. The Proton acceptor role is filled by histidine 21. TRNA-binding residues include phenylalanine 67, asparagine 69, and asparagine 115.

The protein belongs to the PTH family. As to quaternary structure, monomer.

Its subcellular location is the cytoplasm. It carries out the reaction an N-acyl-L-alpha-aminoacyl-tRNA + H2O = an N-acyl-L-amino acid + a tRNA + H(+). In terms of biological role, hydrolyzes ribosome-free peptidyl-tRNAs (with 1 or more amino acids incorporated), which drop off the ribosome during protein synthesis, or as a result of ribosome stalling. Catalyzes the release of premature peptidyl moieties from peptidyl-tRNA molecules trapped in stalled 50S ribosomal subunits, and thus maintains levels of free tRNAs and 50S ribosomes. The chain is Peptidyl-tRNA hydrolase from Salmonella heidelberg (strain SL476).